A 310-amino-acid polypeptide reads, in one-letter code: MLTTEKLVETLKLDLIAGEEGLSKPIKNADISRPGLEMAGYFSHYASDRIQLLGTTELSFYNLLPDKDRAGRMRKLCRPETPAIIVTRGLQPPEELVEAAKELNTPLIVAKDATTSLMSRLTTFLEHALAKTTSLHGVLVDVYGVGVLITGDSGIGKSETALELVKRGHRLVADDNVEIRQINKDELIGKPPKLIEHLLEIRGLGIINVMTLFGAGSILTEKRIRLNINLENWNKQKLYDRVGLNEETLSILDTEITKKTIPVRPGRNVAVIIEVAAMNYRLNIMGINTAEEFSERLNEEIIKNSHKSEE.

Active-site residues include histidine 136 and lysine 157. Residue 151–158 (GDSGIGKS) participates in ATP binding. Residue serine 158 coordinates Mg(2+). Residue aspartate 175 is the Proton acceptor; for phosphorylation activity. Proton donor; for dephosphorylation activity of the active site. Residues 199-208 (LEIRGLGIIN) are important for the catalytic mechanism of both phosphorylation and dephosphorylation. Residue glutamate 200 participates in Mg(2+) binding. The active site involves arginine 241. Residues 262–267 (PVRPGR) form an important for the catalytic mechanism of dephosphorylation region.

It belongs to the HPrK/P family. Homohexamer. Mg(2+) serves as cofactor.

It carries out the reaction [HPr protein]-L-serine + ATP = [HPr protein]-O-phospho-L-serine + ADP + H(+). It catalyses the reaction [HPr protein]-O-phospho-L-serine + phosphate + H(+) = [HPr protein]-L-serine + diphosphate. Its function is as follows. Catalyzes the ATP- as well as the pyrophosphate-dependent phosphorylation of a specific serine residue in HPr, a phosphocarrier protein of the phosphoenolpyruvate-dependent sugar phosphotransferase system (PTS). HprK/P also catalyzes the pyrophosphate-producing, inorganic phosphate-dependent dephosphorylation (phosphorolysis) of seryl-phosphorylated HPr (P-Ser-HPr). The two antagonistic activities of HprK/P are regulated by several intracellular metabolites, which change their concentration in response to the absence or presence of rapidly metabolisable carbon sources (glucose, fructose, etc.) in the growth medium. Therefore, by controlling the phosphorylation state of HPr, HPrK/P is a sensor enzyme that plays a major role in the regulation of carbon metabolism and sugar transport: it mediates carbon catabolite repression (CCR), and regulates PTS-catalyzed carbohydrate uptake and inducer exclusion. In Staphylococcus aureus (strain Mu3 / ATCC 700698), this protein is HPr kinase/phosphorylase.